We begin with the raw amino-acid sequence, 118 residues long: Holo-[acyl-carrier-protein] synthase (118 aa).

2 residues coordinate Mg(2+): Asp8 and Glu58.

Belongs to the P-Pant transferase superfamily. AcpS family. Mg(2+) is required as a cofactor.

It localises to the cytoplasm. It carries out the reaction apo-[ACP] + CoA = holo-[ACP] + adenosine 3',5'-bisphosphate + H(+). Transfers the 4'-phosphopantetheine moiety from coenzyme A to a Ser of acyl-carrier-protein. This is Holo-[acyl-carrier-protein] synthase from Listeria welshimeri serovar 6b (strain ATCC 35897 / DSM 20650 / CCUG 15529 / CIP 8149 / NCTC 11857 / SLCC 5334 / V8).